The primary structure comprises 368 residues: Quinolinate synthase (368 aa).

Iminosuccinate contacts are provided by H46 and S63. C110 is a [4Fe-4S] cluster binding site. Residues 141–143 (YVN) and S162 each bind iminosuccinate. C230 is a binding site for [4Fe-4S] cluster. Residues 256-258 (HPE) and T273 each bind iminosuccinate. C320 contributes to the [4Fe-4S] cluster binding site.

Belongs to the quinolinate synthase family. Type 3 subfamily. It depends on [4Fe-4S] cluster as a cofactor.

Its subcellular location is the cytoplasm. The catalysed reaction is iminosuccinate + dihydroxyacetone phosphate = quinolinate + phosphate + 2 H2O + H(+). Its pathway is cofactor biosynthesis; NAD(+) biosynthesis; quinolinate from iminoaspartate: step 1/1. Its function is as follows. Catalyzes the condensation of iminoaspartate with dihydroxyacetone phosphate to form quinolinate. This chain is Quinolinate synthase, found in Bacillus mycoides (strain KBAB4) (Bacillus weihenstephanensis).